The primary structure comprises 224 residues: LexA repressor (224 aa).

A DNA-binding region (H-T-H motif) is located at residues 31-51; sequence RAEIAAEFGFKSANAAEEHLQ. Residues Ser142 and Lys179 each act as for autocatalytic cleavage activity in the active site.

Belongs to the peptidase S24 family. Homodimer.

The enzyme catalyses Hydrolysis of Ala-|-Gly bond in repressor LexA.. In terms of biological role, represses a number of genes involved in the response to DNA damage (SOS response), including recA and lexA. In the presence of single-stranded DNA, RecA interacts with LexA causing an autocatalytic cleavage which disrupts the DNA-binding part of LexA, leading to derepression of the SOS regulon and eventually DNA repair. This Paracidovorax citrulli (strain AAC00-1) (Acidovorax citrulli) protein is LexA repressor.